We begin with the raw amino-acid sequence, 92 residues long: Probable Fe(2+)-trafficking protein (92 aa).

Belongs to the Fe(2+)-trafficking protein family.

In terms of biological role, could be a mediator in iron transactions between iron acquisition and iron-requiring processes, such as synthesis and/or repair of Fe-S clusters in biosynthetic enzymes. In Shewanella frigidimarina (strain NCIMB 400), this protein is Probable Fe(2+)-trafficking protein.